Here is a 307-residue protein sequence, read N- to C-terminus: 2,4-diacetylphloroglucinol hydrolase (307 aa).

Histidine 142, glutamate 173, histidine 283, and glutamate 287 together coordinate Zn(2+).

Belongs to the DAPG/phloretin hydrolase family. It depends on Zn(2+) as a cofactor.

The enzyme catalyses 2,4-diacetylphloroglucinol + H2O = 2-acetylphloroglucinol + acetate. With respect to regulation, activity is strongly reduced by pyoluteorin, an antifungal compound produced by the bacterium. Functionally, hydrolase that specifically degrades the potent antimicrobial compound 2,4-diacetylphloroglucinol (DAPG) to equimolar amounts of mildly toxic monoacetylphloroglucinol (MAPG) and acetate. Does not degrade other compounds with structures similar to DAPG, such as MAPG and triacetylphloroglucinol, suggesting strict substrate specificity. Degradation of DAPG to MAPG may provide an additional means of fine-tuning levels of this antibiotic or may help avoid accumulation of a metabolite that at high levels may become toxic to the producing bacterium. The polypeptide is 2,4-diacetylphloroglucinol hydrolase (Pseudomonas protegens (strain DSM 19095 / LMG 27888 / CFBP 6595 / CHA0)).